We begin with the raw amino-acid sequence, 689 residues long: ATP-dependent zinc metalloprotease FtsH 2 (689 aa).

Topologically, residues 1-3 are cytoplasmic; sequence MRK. A helical transmembrane segment spans residues 4–24; the sequence is FFRGASFYILAFIIILFIVQN. Over 25–111 the chain is Extracellular; the sequence is FGRPTQEIDE…SAAPPPTTPW (87 aa). A helical membrane pass occupies residues 112 to 132; the sequence is FIELLPSIFMVLIFIVFWFVF. Topologically, residues 133-689 are cytoplasmic; sequence MQQSQGGGNR…QDNEENRKEE (557 aa). 205 to 212 contributes to the ATP binding site; sequence GPPGTGKT. Residue His427 participates in Zn(2+) binding. Glu428 is a catalytic residue. Zn(2+) is bound by residues His431 and Asp503. The segment covering 661–673 has biased composition (basic and acidic residues); it reads EELIEVSSDKEEE. The tract at residues 661 to 689 is disordered; it reads EELIEVSSDKEEEKDNQDDQDNEENRKEE.

In the central section; belongs to the AAA ATPase family. The protein in the C-terminal section; belongs to the peptidase M41 family. As to quaternary structure, homohexamer. Zn(2+) serves as cofactor.

It is found in the cell membrane. Its function is as follows. Acts as a processive, ATP-dependent zinc metallopeptidase for both cytoplasmic and membrane proteins. Plays a role in the quality control of integral membrane proteins. The polypeptide is ATP-dependent zinc metalloprotease FtsH 2 (Alkaliphilus metalliredigens (strain QYMF)).